The sequence spans 251 residues: Hydroxyacylglutathione hydrolase (251 aa).

Residues His53, His55, Asp57, His58, His110, Asp127, and His165 each coordinate Zn(2+).

It belongs to the metallo-beta-lactamase superfamily. Glyoxalase II family. In terms of assembly, monomer. Requires Zn(2+) as cofactor.

The enzyme catalyses an S-(2-hydroxyacyl)glutathione + H2O = a 2-hydroxy carboxylate + glutathione + H(+). It participates in secondary metabolite metabolism; methylglyoxal degradation; (R)-lactate from methylglyoxal: step 2/2. Thiolesterase that catalyzes the hydrolysis of S-D-lactoyl-glutathione to form glutathione and D-lactic acid. This is Hydroxyacylglutathione hydrolase from Salmonella dublin (strain CT_02021853).